The following is a 252-amino-acid chain: Origin recognition complex subunit 6 (252 aa).

A Phosphothreonine modification is found at Thr-195. A Glycyl lysine isopeptide (Lys-Gly) (interchain with G-Cter in SUMO2) cross-link involves residue Lys-210. Phosphothreonine is present on Thr-229.

This sequence belongs to the ORC6 family. In terms of assembly, component of ORC, a complex composed of at least 6 subunits: ORC1, ORC2, ORC3, ORC4, ORC5 and ORC6. ORC is regulated in a cell-cycle dependent manner. It is sequentially assembled at the exit from anaphase of mitosis and disassembled as cells enter S phase. Interacts with DBF4.

It is found in the nucleus. Component of the origin recognition complex (ORC) that binds origins of replication. DNA-binding is ATP-dependent. The specific DNA sequences that define origins of replication have not been identified yet. ORC is required to assemble the pre-replication complex necessary to initiate DNA replication. The sequence is that of Origin recognition complex subunit 6 (ORC6) from Bos taurus (Bovine).